Consider the following 318-residue polypeptide: Type II methyltransferase M.HaeII (318 aa).

Residues tyrosine 4 to alanine 304 enclose the SAM-dependent MTase C5-type domain. The active site involves cysteine 73.

Belongs to the class I-like SAM-binding methyltransferase superfamily. C5-methyltransferase family.

The catalysed reaction is a 2'-deoxycytidine in DNA + S-adenosyl-L-methionine = a 5-methyl-2'-deoxycytidine in DNA + S-adenosyl-L-homocysteine + H(+). Functionally, a methylase, recognizes the double-stranded sequence 5'-RGCGCY-3', methylates C-? on both strands, and protects the DNA from cleavage by the HaeII endonuclease. In Haemophilus aegyptius, this protein is Type II methyltransferase M.HaeII (haeIIM).